Here is a 192-residue protein sequence, read N- to C-terminus: Casparian strip membrane protein 2 (192 aa).

Topologically, residues 1 to 31 (MTKDVVVEHGESSKAPLVAAPAASGVGRAAS) are cytoplasmic. The helical transmembrane segment at 32-52 (VADVFLRFLAIVGTIASAISM) threads the bilayer. Residues 53-79 (GTTNETLPFFTQFIQFEAKYSDLPSFT) are Extracellular-facing. Asparagine 56 carries N-linked (GlcNAc...) asparagine glycosylation. Residues 80 to 100 (FFVAANAVVCTYLVLSIPLSI) traverse the membrane as a helical segment. Topologically, residues 101 to 112 (VHIVRPRARYSR) are cytoplasmic. A helical transmembrane segment spans residues 113-133 (LVLVFFDAAMLTLLTAGASAA). Over 134–166 (AAIVYLAHKGNVRANWFAICQQFDSFCERISGS) the chain is Extracellular. Residues 167–187 (LIGSFAAMVLLIMLIFLSAFA) traverse the membrane as a helical segment. At 188–192 (LARRH) the chain is on the cytoplasmic side.

This sequence belongs to the Casparian strip membrane proteins (CASP) family. As to quaternary structure, homodimer and heterodimers.

The protein resides in the cell membrane. In terms of biological role, regulates membrane-cell wall junctions and localized cell wall deposition. Required for establishment of the Casparian strip membrane domain (CSD) and the subsequent formation of Casparian strips, a cell wall modification of the root endodermis that determines an apoplastic barrier between the intraorganismal apoplasm and the extraorganismal apoplasm and prevents lateral diffusion. The chain is Casparian strip membrane protein 2 from Panicum virgatum (Blackwell switchgrass).